A 281-amino-acid chain; its full sequence is Fibrinogen-like protein 1-like protein (281 aa).

The first 33 residues, 1–33, serve as a signal peptide directing secretion; that stretch reads MGLQAGTRQLHGNLILLPVAVVMLLLCTSPVCA. One can recognise a Fibrinogen C-terminal domain in the interval 34–246; the sequence is TASVGLPADC…RPSSWSNPPM (213 aa). 2 disulfides stabilise this stretch: C43/C69 and C201/C213. The segment covering 260–269 has biased composition (low complexity); the sequence is PSRSPSLPSP. The tract at residues 260-281 is disordered; the sequence is PSRSPSLPSPITATHTVRNQLQ. The segment covering 270–281 has biased composition (polar residues); the sequence is ITATHTVRNQLQ.

In terms of tissue distribution, expressed in smal intestine, colon and lung.

Shows a cytidine deaminase activity on 2'-deoxycytidine (in vitro), however shows no RNA editing activity (in vitro). The protein is Fibrinogen-like protein 1-like protein of Gallus gallus (Chicken).